Here is a 346-residue protein sequence, read N- to C-terminus: Queuosine 5'-phosphate N-glycosylase/hydrolase (346 aa).

Residues His49, Phe243, Asp245, Asp310, and Asp315 each contribute to the queuine site. The Nucleophile or transition state stabilizer role is filled by Asp245.

This sequence belongs to the QNG1 protein family.

It carries out the reaction queuosine 5'-phosphate + H2O = queuine + D-ribose 5-phosphate. Catalyzes the hydrolysis of queuosine 5'-phosphate, releasing the nucleobase queuine (q). Is required for salvage of queuine from exogenous queuosine (Q) that is imported and then converted to queuosine 5'-phosphate intracellularly. This is Queuosine 5'-phosphate N-glycosylase/hydrolase from Schizosaccharomyces pombe (strain 972 / ATCC 24843) (Fission yeast).